Reading from the N-terminus, the 636-residue chain is Transcription termination factor FttA (636 aa).

The segment at 3-70 (SEMLEEIKRT…IIIRSDRSVL (68 aa)) is KHa. The tract at residues 71–138 (MDPEKAIRKI…WAPKILRTPP (68 aa)) is KHb. The tract at residues 179-383 (WARLTAMGGF…LVMESTYGGH (205 aa)) is metallo-beta-lactamase N-terminus. Zn(2+) contacts are provided by His242, His244, Asp246, His247, His329, and Asp352. The interval 384–577 (EDVQPSRNRA…MNIKTIEGFS (194 aa)) is beta-Casp. Residues 578–636 (GHSDRRQLMEYVKRISPKPEKILLCHGDNYKTLDLASSIYRTYRIETKTPLNLETVRIQ) are metallo-beta-lactamase C-terminus. Position 603 (His603) interacts with Zn(2+).

This sequence belongs to the metallo-beta-lactamase superfamily. RNA-metabolizing metallo-beta-lactamase-like family. FttA subfamily. Homodimer. Interacts with RNA polymerase (RNAP), interacts with the Spt4-Spt5 complex. Does not seem to interact with the RNA degrading exosome. Requires Zn(2+) as cofactor.

Most active at 0.5 M or 0.7 M NaCl, less active at 1.0 M NaCl. Nuclease activity is inhibited by N,N,Tetrakis-(2-pyridylmethyl)-ethylene diamine (TPEN), a specific chelator of zinc ions. Terminates transcription on the whole genome. Termination is linked to FttA-mediated RNA cleavage and does not require NTP hydrolysis. Cleaves endonucleolytically at the RNA exit channel of RNA polymerase (RNAP); the 5'-3' exonuclease activity of this protein degrades the nascent RNA released from RNAP. Its function is as follows. An RNA nuclease, it bind single-stranded RNA (ssRNA) with a preference for U-rich sequences. The polypeptide is Transcription termination factor FttA (Methanothermobacter thermautotrophicus (strain ATCC 29096 / DSM 1053 / JCM 10044 / NBRC 100330 / Delta H) (Methanobacterium thermoautotrophicum)).